The chain runs to 181 residues: Probable cobalt-precorrin-6B C(15)-methyltransferase (decarboxylating) (181 aa).

S-adenosyl-L-methionine is bound by residues T16, 40–44 (GCGSG), D61, and A89.

This sequence belongs to the methyltransferase superfamily. Archaeal-type CbiT family.

The catalysed reaction is Co-precorrin-6B + S-adenosyl-L-methionine = Co-precorrin-7 + S-adenosyl-L-homocysteine + CO2. It participates in cofactor biosynthesis; adenosylcobalamin biosynthesis; cob(II)yrinate a,c-diamide from sirohydrochlorin (anaerobic route): step 8/10. Functionally, catalyzes the methylation of C-15 in cobalt-precorrin-6B followed by the decarboxylation of C-12 to form cobalt-precorrin-7. In Methanococcus maripaludis (strain C6 / ATCC BAA-1332), this protein is Probable cobalt-precorrin-6B C(15)-methyltransferase (decarboxylating).